We begin with the raw amino-acid sequence, 213 residues long: Iron sulfur cluster assembly protein 1, mitochondrial (213 aa).

Belongs to the NifU family. In terms of assembly, component of the core Fe-S cluster (ISC) assembly machinery. Requires [2Fe-2S] cluster as cofactor.

The protein resides in the mitochondrion matrix. The protein operates within cofactor biosynthesis; iron-sulfur cluster biosynthesis. In terms of biological role, scaffold protein for the de novo synthesis of iron-sulfur (Fe-S) clusters within mitochondria, which is required for maturation of both mitochondrial and cytoplasmic [2Fe-2S] and [4Fe-4S] proteins. First, a [2Fe-2S] cluster is transiently assembled on the scaffold protein ISU1. In a second step, the cluster is released from ISU1, transferred to a glutaredoxin, followed by the formation of mitochondrial [2Fe-2S] proteins, the synthesis of [4Fe-4S] clusters and their target-specific insertion into the recipient apoproteins. Cluster assembly on ISU1 depends on the function of the cysteine desulfurase complex NFS1-ISD11, which serves as the sulfur donor for cluster synthesis, the iron-binding protein frataxin as the putative iron donor, and the electron transfer chain comprised of ferredoxin reductase and ferredoxin, which receive their electrons from NADH. The polypeptide is Iron sulfur cluster assembly protein 1, mitochondrial (ISU1) (Candida glabrata (strain ATCC 2001 / BCRC 20586 / JCM 3761 / NBRC 0622 / NRRL Y-65 / CBS 138) (Yeast)).